Consider the following 642-residue polypeptide: Conserved oligomeric Golgi complex subunit 6 (642 aa).

The protein belongs to the COG6 family. In terms of assembly, component of the conserved oligomeric Golgi complex which is composed of eight different subunits and is required for normal Golgi morphology and localization.

It is found in the golgi apparatus membrane. Required for normal Golgi function. The chain is Conserved oligomeric Golgi complex subunit 6 (cogc-6) from Caenorhabditis elegans.